Here is a 308-residue protein sequence, read N- to C-terminus: tRNA dimethylallyltransferase (308 aa).

10 to 17 (GPTASGKT) serves as a coordination point for ATP. 12 to 17 (TASGKT) is a substrate binding site. Interaction with substrate tRNA stretches follow at residues 35–38 (DSSL) and 159–163 (QRIFR).

The protein belongs to the IPP transferase family. In terms of assembly, monomer. Mg(2+) serves as cofactor.

It carries out the reaction adenosine(37) in tRNA + dimethylallyl diphosphate = N(6)-dimethylallyladenosine(37) in tRNA + diphosphate. Functionally, catalyzes the transfer of a dimethylallyl group onto the adenine at position 37 in tRNAs that read codons beginning with uridine, leading to the formation of N6-(dimethylallyl)adenosine (i(6)A). The sequence is that of tRNA dimethylallyltransferase from Francisella tularensis subsp. novicida (strain U112).